A 132-amino-acid polypeptide reads, in one-letter code: Pro-MCH 1 (132 aa).

An N-terminal signal peptide occupies residues 1–24; it reads MRHYVLSISFAVALFLECYTPSTA. A disulfide bridge connects residues cysteine 120 and cysteine 129.

It belongs to the melanin-concentrating hormone family. In terms of tissue distribution, pituitary gland. Produced in neurons of lateral basal hypothalamus which project both to the brain and to the neural lobe of the pituitary gland from where MCH is released.

Functionally, plays a role in skin pigmentation by antagonizing the action of melanotropin alpha. Induces melanin concentration within the melanophores. May participate in the control of the hypothalamo-pituitary adrenal gland axis by inhibiting the release of ACTH. In Oncorhynchus keta (Chum salmon), this protein is Pro-MCH 1 (mch1).